Reading from the N-terminus, the 439-residue chain is Dolichyl-diphosphooligosaccharide--protein glycosyltransferase 48 kDa subunit (439 aa).

Residues 1–26 (MATRAARVWSGWWLLLLPLLGLAGAS) form the signal peptide. Residues 27 to 409 (GPRTLVLLDN…QYERFIPSAY (383 aa)) lie on the Lumenal side of the membrane. Residues 410 to 430 (PYYASAFSMMLGLFIFSVVFL) form a helical membrane-spanning segment. The Cytoplasmic portion of the chain corresponds to 431–439 (HMKEKEKSD).

Belongs to the DDOST 48 kDa subunit family. Component of the oligosaccharyltransferase (OST) complex. OST exists in two different complex forms which contain common core subunits RPN1, RPN2, OST48, OST4, DAD1 and TMEM258, either STT3A or STT3B as catalytic subunits, and form-specific accessory subunits. STT3A complex assembly occurs through the formation of 3 subcomplexes. Subcomplex 1 contains RPN1 and TMEM258, subcomplex 2 contains the STT3A-specific subunits STT3A, DC2/OSTC, and KCP2 as well as the core subunit OST4, and subcomplex 3 contains RPN2, DAD1, and OST48. The STT3A complex can form stable complexes with the Sec61 complex or with both the Sec61 and TRAP complexes. Interacts with SMIM22.

It localises to the endoplasmic reticulum membrane. Its pathway is protein modification; protein glycosylation. Subunit of the oligosaccharyl transferase (OST) complex that catalyzes the initial transfer of a defined glycan (Glc(3)Man(9)GlcNAc(2) in eukaryotes) from the lipid carrier dolichol-pyrophosphate to an asparagine residue within an Asn-X-Ser/Thr consensus motif in nascent polypeptide chains, the first step in protein N-glycosylation. N-glycosylation occurs cotranslationally and the complex associates with the Sec61 complex at the channel-forming translocon complex that mediates protein translocation across the endoplasmic reticulum (ER). All subunits are required for a maximal enzyme activity. Required for the assembly of both SST3A- and SS3B-containing OST complexes. The protein is Dolichyl-diphosphooligosaccharide--protein glycosyltransferase 48 kDa subunit of Bos taurus (Bovine).